A 280-amino-acid polypeptide reads, in one-letter code: Pantothenate synthetase (280 aa).

An ATP-binding site is contributed by 30-37 (MGYLHEGH). The active-site Proton donor is the His37. (R)-pantoate is bound at residue Gln61. Gln61 is a beta-alanine binding site. 147–150 (GKKD) lines the ATP pocket. Gln153 contacts (R)-pantoate. Residues Val176 and 184-187 (MSSR) contribute to the ATP site.

It belongs to the pantothenate synthetase family. Homodimer.

The protein resides in the cytoplasm. The enzyme catalyses (R)-pantoate + beta-alanine + ATP = (R)-pantothenate + AMP + diphosphate + H(+). Its pathway is cofactor biosynthesis; (R)-pantothenate biosynthesis; (R)-pantothenate from (R)-pantoate and beta-alanine: step 1/1. In terms of biological role, catalyzes the condensation of pantoate with beta-alanine in an ATP-dependent reaction via a pantoyl-adenylate intermediate. The sequence is that of Pantothenate synthetase from Sulfurihydrogenibium sp. (strain YO3AOP1).